A 375-amino-acid chain; its full sequence is E3 ubiquitin-protein ligase FANCL (375 aa).

Position 2 is an N-acetylalanine (alanine 2). Residues 104–294 (LPPPPQFYSS…KDVLEIDFPA (191 aa)) are UBC-RWD region (URD). Cysteine 307, cysteine 310, cysteine 324, cysteine 329, histidine 334, cysteine 337, cysteine 359, and cysteine 362 together coordinate Zn(2+). Residues 307–363 (CGICYAYQLDGTIPDQVCDNSQCGQPFHQICLYEWLRGLLTSRQSFNIIFGECPYCS) form an RING-type; degenerate zinc finger.

As to quaternary structure, interacts with GGN. Belongs to the multisubunit FA complex composed of FANCA, FANCB, FANCC, FANCE, FANCF, FANCG, FANCL/PHF9 and FANCM. The complex is not found in FA patients. In complex with FANCF, FANCA and FANCG, but not with FANCC, nor FANCE, interacts with HES1; this interaction may be essential for the stability and nuclear localization of FA core complex proteins. Interacts with FANCI. Directly interacts (via the RING-type zinc finger) with UBE2T and UBE2W. The RING-type zinc finger domain is monoubiquitinated in the presence of UBE2T and UBE2W.

The protein resides in the cytoplasm. It localises to the nucleus. The enzyme catalyses S-ubiquitinyl-[E2 ubiquitin-conjugating enzyme]-L-cysteine + [acceptor protein]-L-lysine = [E2 ubiquitin-conjugating enzyme]-L-cysteine + N(6)-ubiquitinyl-[acceptor protein]-L-lysine.. The protein operates within protein modification; protein ubiquitination. Its function is as follows. Ubiquitin ligase protein that mediates monoubiquitination of FANCD2 in the presence of UBE2T, a key step in the DNA damage pathway. Also mediates monoubiquitination of FANCI. May stimulate the ubiquitin release from UBE2W. May be required for proper primordial germ cell proliferation in the embryonic stage, whereas it is probably not needed for spermatogonial proliferation after birth. The sequence is that of E3 ubiquitin-protein ligase FANCL (FANCL) from Homo sapiens (Human).